A 592-amino-acid polypeptide reads, in one-letter code: Probable translation initiation factor IF-2 (592 aa).

Residues 5–226 (IRSPFVVVMG…AGVSQRFIPR (222 aa)) enclose the tr-type G domain. The interval 14-21 (GHVDVGKT) is G1. 14–21 (GHVDVGKT) is a binding site for GTP. Residues 39-43 (MITQH) are G2. Residues 80 to 83 (DTPG) are G3. GTP-binding positions include 80 to 84 (DTPGH) and 134 to 137 (NKLD). The interval 134–137 (NKLD) is G4. Residues 202–204 (SAV) are G5.

Belongs to the TRAFAC class translation factor GTPase superfamily. Classic translation factor GTPase family. IF-2 subfamily.

In terms of biological role, function in general translation initiation by promoting the binding of the formylmethionine-tRNA to ribosomes. Seems to function along with eIF-2. This is Probable translation initiation factor IF-2 from Pyrobaculum calidifontis (strain DSM 21063 / JCM 11548 / VA1).